Reading from the N-terminus, the 224-residue chain is Transcription cofactor HES-6 (224 aa).

Residues 1–31 form a disordered region; sequence MAPPAAPGRDRVGREDEDGWETRGDRKARKP. Positions 8-25 are enriched in basic and acidic residues; the sequence is GRDRVGREDEDGWETRGD. The region spanning 25–77 is the bHLH domain; that stretch reads DRKARKPLVEKKRRARINESLQELRLLLAGAEVQAKLENAEVLELTVRRVQGV. The 34-residue stretch at 96-129 folds into the Orange domain; it reads FAAGYIQCMHEVHTFVSTCQAIDATVAAELLNHL. Residues 147–161 are compositionally biased toward low complexity; it reads DALAGPPRAPGRSGW. The interval 147-205 is disordered; sequence DALAGPPRAPGRSGWPAGGAPGSPIPSPPGPGDDLCSDLEEAPEAELSQAPAEGPDLVP. A compositionally biased stretch (acidic residues) spans 181–190; it reads LCSDLEEAPE. The WRPW motif motif lies at 221–224; the sequence is WRPW.

As to quaternary structure, transcription repression requires formation of a complex with a corepressor protein of the Groucho/TLE family. Interacts with HES1.

The protein localises to the nucleus. Its function is as follows. Does not bind DNA itself but suppresses both HES1-mediated N box-dependent transcriptional repression and binding of HES1 to E box sequences. Also suppresses HES1-mediated inhibition of the heterodimer formed by ASCL1/MASH1 and TCF3/E47, allowing ASCL1 and TCF3 to up-regulate transcription in its presence. Promotes cell differentiation. This is Transcription cofactor HES-6 from Homo sapiens (Human).